The chain runs to 98 residues: MKRLLIVLIALLAMLEYRLWFGDKSLAESFHLQEQIKLQQQSNAQLVARNQILREEISDLRSGTEALEERARNELGMVKEGETFFRVVGGERDKPSND.

The Cytoplasmic portion of the chain corresponds to 1–3 (MKR). The helical transmembrane segment at 4 to 21 (LLIVLIALLAMLEYRLWF) threads the bilayer. The Periplasmic segment spans residues 22–98 (GDKSLAESFH…GGERDKPSND (77 aa)). A coiled-coil region spans residues 31 to 74 (HLQEQIKLQQQSNAQLVARNQILREEISDLRSGTEALEERARNE).

Belongs to the FtsB family. As to quaternary structure, part of a complex composed of FtsB, FtsL and FtsQ.

The protein localises to the cell inner membrane. Functionally, essential cell division protein. May link together the upstream cell division proteins, which are predominantly cytoplasmic, with the downstream cell division proteins, which are predominantly periplasmic. The sequence is that of Cell division protein FtsB from Shewanella halifaxensis (strain HAW-EB4).